The chain runs to 70 residues: U-scutigerotoxin(02)-Tl1a (70 aa).

Residues Met1–Ala17 form the signal peptide.

The protein belongs to the scutigerotoxin-02 family. In terms of processing, contains 4 disulfide bonds. In terms of tissue distribution, expressed by the venom gland.

The protein resides in the secreted. In Thereuopoda longicornis (Long-legged centipede), this protein is U-scutigerotoxin(02)-Tl1a.